The chain runs to 338 residues: Solute-binding protein Rfer_1840 (338 aa).

The first 25 residues, 1–25, serve as a signal peptide directing secretion; the sequence is MQRRQLLQSMGGLAASTMPFSLAFA. Malonate-binding positions include R47, Y100, R175, S197, 214–218, and E244; that span reads TSSTS.

It belongs to the bacterial solute-binding protein 7 family. In terms of assembly, the complex is comprised of an extracytoplasmic solute-binding protein and a heteromeric permease formed by two transmembrane proteins.

It localises to the periplasm. Solute-binding protein that binds malonate (in vitro). Probably part of a tripartite ATP-independent periplasmic (TRAP) transport system that mediates solute transport into the cytoplasm. This is Solute-binding protein Rfer_1840 from Albidiferax ferrireducens (strain ATCC BAA-621 / DSM 15236 / T118) (Rhodoferax ferrireducens).